Here is a 460-residue protein sequence, read N- to C-terminus: Bifunctional protein GlmU (460 aa).

The segment at 1–235 (MALSAAIVLA…PLTVEGVNDR (235 aa)) is pyrophosphorylase. Residues 9–12 (LAAG), lysine 23, glutamine 76, and 81–82 (GT) each bind UDP-N-acetyl-alpha-D-glucosamine. Aspartate 109 is a binding site for Mg(2+). Positions 146, 161, 176, and 233 each coordinate UDP-N-acetyl-alpha-D-glucosamine. Asparagine 233 contacts Mg(2+). Residues 236–256 (VQLAALSKTYNRRVCERWMRD) form a linker region. The N-acetyltransferase stretch occupies residues 257–460 (GVTILDPETT…VEGWKPAWER (204 aa)). UDP-N-acetyl-alpha-D-glucosamine contacts are provided by arginine 338 and lysine 356. The Proton acceptor role is filled by histidine 368. Tyrosine 371 and asparagine 382 together coordinate UDP-N-acetyl-alpha-D-glucosamine. Acetyl-CoA contacts are provided by residues 391–392 (NY) and alanine 428.

The protein in the N-terminal section; belongs to the N-acetylglucosamine-1-phosphate uridyltransferase family. This sequence in the C-terminal section; belongs to the transferase hexapeptide repeat family. Homotrimer. Mg(2+) serves as cofactor.

Its subcellular location is the cytoplasm. It carries out the reaction alpha-D-glucosamine 1-phosphate + acetyl-CoA = N-acetyl-alpha-D-glucosamine 1-phosphate + CoA + H(+). It catalyses the reaction N-acetyl-alpha-D-glucosamine 1-phosphate + UTP + H(+) = UDP-N-acetyl-alpha-D-glucosamine + diphosphate. It participates in nucleotide-sugar biosynthesis; UDP-N-acetyl-alpha-D-glucosamine biosynthesis; N-acetyl-alpha-D-glucosamine 1-phosphate from alpha-D-glucosamine 6-phosphate (route II): step 2/2. The protein operates within nucleotide-sugar biosynthesis; UDP-N-acetyl-alpha-D-glucosamine biosynthesis; UDP-N-acetyl-alpha-D-glucosamine from N-acetyl-alpha-D-glucosamine 1-phosphate: step 1/1. Its pathway is bacterial outer membrane biogenesis; LPS lipid A biosynthesis. In terms of biological role, catalyzes the last two sequential reactions in the de novo biosynthetic pathway for UDP-N-acetylglucosamine (UDP-GlcNAc). The C-terminal domain catalyzes the transfer of acetyl group from acetyl coenzyme A to glucosamine-1-phosphate (GlcN-1-P) to produce N-acetylglucosamine-1-phosphate (GlcNAc-1-P), which is converted into UDP-GlcNAc by the transfer of uridine 5-monophosphate (from uridine 5-triphosphate), a reaction catalyzed by the N-terminal domain. The sequence is that of Bifunctional protein GlmU from Bifidobacterium longum (strain NCC 2705).